A 161-amino-acid polypeptide reads, in one-letter code: Abscisic acid receptor PYL11 (161 aa).

Residues 3–154 form an START-like region; the sequence is TSQKYHTCGS…NLKSLAKLSE (152 aa). Abscisate-binding positions include lysine 39, 68-73, 95-101, and glutamate 119; these read AEFSRE and RLVNYRS. A Gate loop motif is present at residues 64-68; the sequence is SGLPA. The Latch loop motif lies at 94 to 96; sequence HRL.

This sequence belongs to the PYR/PYL/RCAR abscisic acid intracellular receptor family. Homodimer. Binds ABA on one subunit only. Interacts with PP2Cs. Binds to CARs protein in an ABA-independent manner, both at the plasma membrane and in the nucleus. Interacts with I-2 and TOPP1.

The protein localises to the cytoplasm. It is found in the nucleus. It localises to the cell membrane. In terms of biological role, receptor for abscisic acid (ABA) required for ABA-mediated responses such as stomatal closure and germination inhibition. Inhibits the activity of group-A protein phosphatases type 2C (PP2Cs) when activated by ABA. Suppresses the phosphatase activity of TOPP1 in a dose-dependent manner in vitro. This chain is Abscisic acid receptor PYL11 (PYL11), found in Arabidopsis thaliana (Mouse-ear cress).